Reading from the N-terminus, the 214-residue chain is Pyridoxine/pyridoxamine 5'-phosphate oxidase (214 aa).

Substrate-binding positions include 9–12 (RKDY) and K67. Residues 62–67 (RMVLLK), 77–78 (FT), R83, K84, and Q106 contribute to the FMN site. The substrate site is built by Y124, R128, and S132. Residues 141–142 (QS) and W186 each bind FMN. Residue 192–194 (RLH) coordinates substrate. Position 196 (R196) interacts with FMN.

This sequence belongs to the pyridoxamine 5'-phosphate oxidase family. In terms of assembly, homodimer. FMN serves as cofactor.

The enzyme catalyses pyridoxamine 5'-phosphate + O2 + H2O = pyridoxal 5'-phosphate + H2O2 + NH4(+). It catalyses the reaction pyridoxine 5'-phosphate + O2 = pyridoxal 5'-phosphate + H2O2. The protein operates within cofactor metabolism; pyridoxal 5'-phosphate salvage; pyridoxal 5'-phosphate from pyridoxamine 5'-phosphate: step 1/1. It participates in cofactor metabolism; pyridoxal 5'-phosphate salvage; pyridoxal 5'-phosphate from pyridoxine 5'-phosphate: step 1/1. Its function is as follows. Catalyzes the oxidation of either pyridoxine 5'-phosphate (PNP) or pyridoxamine 5'-phosphate (PMP) into pyridoxal 5'-phosphate (PLP). The polypeptide is Pyridoxine/pyridoxamine 5'-phosphate oxidase (Trichormus variabilis (strain ATCC 29413 / PCC 7937) (Anabaena variabilis)).